A 446-amino-acid polypeptide reads, in one-letter code: Immunoglobulin heavy constant gamma 3 (446 aa).

The segment at 1-98 (ASTKGPSVFP…PSNTKVDKRV (98 aa)) is CH1. Residues 1 to 397 (ASTKGPSVFP…DGELDGLWTT (397 aa)) are Extracellular-facing. The region spanning 6–99 (PSVFPLAPCS…SNTKVDKRVE (94 aa)) is the Ig-like 1 domain. Cys27 and Cys83 form a disulfide bridge. The hinge stretch occupies residues 99-160 (ELKTPLGDTT…DTPPPCPRCP (62 aa)). 3 consecutive repeats follow at residues 116-130 (EPKSCDTPPPCPRCP), 131-145 (EPKSCDTPPPCPRCP), and 146-160 (EPKSCDTPPPCPRCP). Residues Thr122, Thr137, and Thr152 are each glycosylated (O-linked (GalNAc...) threonine). A CH2 region spans residues 161 to 270 (APELLGGPSV…PIEKTISKTK (110 aa)). Ig-like domains are found at residues 168 to 267 (PSVF…KTIS) and 276 to 372 (PQVY…KSLS). 2 cysteine pairs are disulfide-bonded: Cys191–Cys251 and Cys297–Cys355. N-linked (GlcNAc...) asparagine glycans are attached at residues Asn227 and Asn322. The interval 271–376 (GQPREPQVYT…TQKSLSLSPE (106 aa)) is CH3. Residues 398–418 (ITIFITLFLLSVCYSATVTFF) traverse the membrane as a helical segment. Residues 419-446 (KVKWIFSSVVDLKQTIIPDYRNMIGQGA) are Cytoplasmic-facing.

In terms of assembly, immunoglobulins are composed of two identical heavy chains and two identical light chains; disulfide-linked. N-linked glycans at Asn-322 are noncore fucosylated and the vast majority are diantennary species with a bisecting GlcNAc. Among them the most dominant glycans are HexNAc5Hex4, HexNAc5Hex5, and HexNAc5Hex5Sia1. In terms of processing, N-linked glycans at Asn-227 are diantennary core fucosylated structures without bisecting GlcNAc (HexNAc4Hex4Fuc1, HexNAc4Hex5Fuc1, and HexNAc4Hex5Fuc1Sia1). Glycosylation on Asn-227 is required for interaction with Fc receptors and ability to activate the complement pathway. Post-translationally, (Microbial infection) Deglycosylation on Asn-227 by S.pyogenes EndoS or Endos2 endoglucosidases prevents interaction between immunoglobulin-gamma (IgG) and Fc receptors, impairing ability to activate the complement pathway. O-linked glycans are non-, mono- and disialylated core 1-type O-glycans.

Its subcellular location is the secreted. The protein localises to the cell membrane. Constant region of immunoglobulin heavy chains. Immunoglobulins, also known as antibodies, are membrane-bound or secreted glycoproteins produced by B lymphocytes. In the recognition phase of humoral immunity, the membrane-bound immunoglobulins serve as receptors which, upon binding of a specific antigen, trigger the clonal expansion and differentiation of B lymphocytes into immunoglobulins-secreting plasma cells. Secreted immunoglobulins mediate the effector phase of humoral immunity, which results in the elimination of bound antigens. The antigen binding site is formed by the variable domain of one heavy chain, together with that of its associated light chain. Thus, each immunoglobulin has two antigen binding sites with remarkable affinity for a particular antigen. The variable domains are assembled by a process called V-(D)-J rearrangement and can then be subjected to somatic hypermutations which, after exposure to antigen and selection, allow affinity maturation for a particular antigen. This chain is Immunoglobulin heavy constant gamma 3, found in Homo sapiens (Human).